Consider the following 579-residue polypeptide: Putative diflavin flavoprotein A 2 (579 aa).

Positions glutamine 50–histidine 243 are zinc metallo-hydrolase. Residues histidine 99, glutamate 101, aspartate 103, histidine 166, aspartate 185, and histidine 243 each coordinate Fe cation. Residues valine 272–serine 460 enclose the Flavodoxin-like domain. The tract at residues leucine 461–tyrosine 579 is flavodoxin-reductase-like.

This sequence in the N-terminal section; belongs to the zinc metallo-hydrolase group 3 family. The protein in the C-terminal section; belongs to the flavodoxin reductase family. Requires Fe cation as cofactor.

In terms of biological role, mediates electron transfer from NADH to oxygen, reducing it to water. This modular protein has 3 redox cofactors, in other organisms the same activity requires 2 or 3 proteins. The polypeptide is Putative diflavin flavoprotein A 2 (dfa2) (Nostoc sp. (strain PCC 7120 / SAG 25.82 / UTEX 2576)).